Reading from the N-terminus, the 339-residue chain is tRNA-specific 2-thiouridylase MnmA (339 aa).

Residues 6–13 (AMSGGVDS) and Met32 each bind ATP. Cys92 (nucleophile) is an active-site residue. A disulfide bridge connects residues Cys92 and Cys186. ATP is bound at residue Gly116. The tract at residues 134-136 (KDQ) is interaction with tRNA. The active-site Cysteine persulfide intermediate is the Cys186. The tract at residues 288–289 (RY) is interaction with tRNA.

The protein belongs to the MnmA/TRMU family.

The protein resides in the cytoplasm. It catalyses the reaction S-sulfanyl-L-cysteinyl-[protein] + uridine(34) in tRNA + AH2 + ATP = 2-thiouridine(34) in tRNA + L-cysteinyl-[protein] + A + AMP + diphosphate + H(+). In terms of biological role, catalyzes the 2-thiolation of uridine at the wobble position (U34) of tRNA, leading to the formation of s(2)U34. The chain is tRNA-specific 2-thiouridylase MnmA from Campylobacter curvus (strain 525.92).